The sequence spans 257 residues: Imidazole glycerol phosphate synthase subunit HisF (257 aa).

Catalysis depends on residues Asp12 and Asp131.

Belongs to the HisA/HisF family. As to quaternary structure, heterodimer of HisH and HisF.

The protein resides in the cytoplasm. It catalyses the reaction 5-[(5-phospho-1-deoxy-D-ribulos-1-ylimino)methylamino]-1-(5-phospho-beta-D-ribosyl)imidazole-4-carboxamide + L-glutamine = D-erythro-1-(imidazol-4-yl)glycerol 3-phosphate + 5-amino-1-(5-phospho-beta-D-ribosyl)imidazole-4-carboxamide + L-glutamate + H(+). It functions in the pathway amino-acid biosynthesis; L-histidine biosynthesis; L-histidine from 5-phospho-alpha-D-ribose 1-diphosphate: step 5/9. Functionally, IGPS catalyzes the conversion of PRFAR and glutamine to IGP, AICAR and glutamate. The HisF subunit catalyzes the cyclization activity that produces IGP and AICAR from PRFAR using the ammonia provided by the HisH subunit. This chain is Imidazole glycerol phosphate synthase subunit HisF, found in Paraburkholderia phymatum (strain DSM 17167 / CIP 108236 / LMG 21445 / STM815) (Burkholderia phymatum).